The following is a 483-amino-acid chain: Cobyric acid synthase (483 aa).

Residues 251–438 (ALIVAVPMLP…LHGVFSADRF (188 aa)) form the GATase cobBQ-type domain. Cys333 acts as the Nucleophile in catalysis. His430 is a catalytic residue.

It belongs to the CobB/CobQ family. CobQ subfamily.

Its pathway is cofactor biosynthesis; adenosylcobalamin biosynthesis. Its function is as follows. Catalyzes amidations at positions B, D, E, and G on adenosylcobyrinic A,C-diamide. NH(2) groups are provided by glutamine, and one molecule of ATP is hydrogenolyzed for each amidation. The sequence is that of Cobyric acid synthase from Brucella suis biovar 1 (strain 1330).